A 477-amino-acid chain; its full sequence is Bifunctional protein HldE (477 aa).

The segment at 1–318 (MKVNLPAFER…ENAVRGRADT (318 aa)) is ribokinase. ATP is bound at residue 195–198 (NLSE). Residue Asp-264 is part of the active site. The cytidylyltransferase stretch occupies residues 344-477 (MTNGVFDILH…IKKIQTESEK (134 aa)).

This sequence in the N-terminal section; belongs to the carbohydrate kinase PfkB family. The protein in the C-terminal section; belongs to the cytidylyltransferase family. In terms of assembly, homodimer.

The enzyme catalyses D-glycero-beta-D-manno-heptose 7-phosphate + ATP = D-glycero-beta-D-manno-heptose 1,7-bisphosphate + ADP + H(+). It catalyses the reaction D-glycero-beta-D-manno-heptose 1-phosphate + ATP + H(+) = ADP-D-glycero-beta-D-manno-heptose + diphosphate. The protein operates within nucleotide-sugar biosynthesis; ADP-L-glycero-beta-D-manno-heptose biosynthesis; ADP-L-glycero-beta-D-manno-heptose from D-glycero-beta-D-manno-heptose 7-phosphate: step 1/4. Its pathway is nucleotide-sugar biosynthesis; ADP-L-glycero-beta-D-manno-heptose biosynthesis; ADP-L-glycero-beta-D-manno-heptose from D-glycero-beta-D-manno-heptose 7-phosphate: step 3/4. Its function is as follows. Catalyzes the phosphorylation of D-glycero-D-manno-heptose 7-phosphate at the C-1 position to selectively form D-glycero-beta-D-manno-heptose-1,7-bisphosphate. In terms of biological role, catalyzes the ADP transfer from ATP to D-glycero-beta-D-manno-heptose 1-phosphate, yielding ADP-D-glycero-beta-D-manno-heptose. The polypeptide is Bifunctional protein HldE (Salmonella paratyphi A (strain ATCC 9150 / SARB42)).